We begin with the raw amino-acid sequence, 703 residues long: uncharacterized protein (703 aa).

Positions 1-23 (MKQIMIFLTSFMLLAMTGQTALA) are cleaved as a signal peptide. A helical membrane pass occupies residues 673-693 (MYIGVLALIMVVAAVFIWIAV).

It is found in the cell membrane. This is an uncharacterized protein from Bacillus subtilis (strain 168).